Reading from the N-terminus, the 98-residue chain is Large ribosomal subunit protein uL23 (98 aa).

Belongs to the universal ribosomal protein uL23 family. In terms of assembly, part of the 50S ribosomal subunit. Contacts protein L29, and trigger factor when it is bound to the ribosome.

Its function is as follows. One of the early assembly proteins it binds 23S rRNA. One of the proteins that surrounds the polypeptide exit tunnel on the outside of the ribosome. Forms the main docking site for trigger factor binding to the ribosome. The sequence is that of Large ribosomal subunit protein uL23 from Methylorubrum extorquens (strain CM4 / NCIMB 13688) (Methylobacterium extorquens).